Here is a 336-residue protein sequence, read N- to C-terminus: Glutamyl endopeptidase (336 aa).

The signal sequence occupies residues 1–29 (MKGKFLKVSSLFVATLTTATLVSSPAANA). A propeptide spanning residues 30–68 (LSSKAMDNHPQQTQSSKQQTPKIQKGGNLKPLEQREHAN) is cleaved from the precursor. A disordered region spans residues 34–61 (AMDNHPQQTQSSKQQTPKIQKGGNLKPL). The span at 39 to 51 (PQQTQSSKQQTPK) shows a compositional bias: low complexity. Catalysis depends on charge relay system residues His-119, Asp-161, and Ser-237. The disordered stretch occupies residues 283 to 336 (FANDDQPNNPDNPDNPNNPDNPNNPDEPNNPDNPNNPDNPDNGDTNNSDNPDAA). A compositionally biased stretch (low complexity) spans 286-336 (DDQPNNPDNPDNPNNPDNPNNPDEPNNPDNPNNPDNPDNGDTNNSDNPDAA). 11 tandem repeats follow at residues 289–291 (PNN), 292–294 (PDN), 295–297 (PDN), 298–300 (PNN), 301–303 (PDN), 304–306 (PNN), 310–312 (PNN), 313–315 (PDN), 316–318 (PNN), 319–321 (PDN), and 322–324 (PDN). The tract at residues 289 to 324 (PNNPDNPDNPNNPDNPNNPDEPNNPDNPNNPDNPDN) is 11 X 3 AA repeats of P-[DN]-N.

Belongs to the peptidase S1B family. Proteolytically cleaved by aureolysin (aur). This cleavage leads to the activation of SspA.

Its subcellular location is the secreted. It catalyses the reaction Preferential cleavage: Glu-|-Xaa, Asp-|-Xaa.. Preferentially cleaves peptide bonds on the carboxyl-terminal side of aspartate and glutamate. Along with other extracellular proteases it is involved in colonization and infection of human tissues. Required for proteolytic maturation of thiol protease SspB and inactivation of SspC, an inhibitor of SspB. It is the most important protease for degradation of fibronectin-binding protein (FnBP) and surface protein A, which are involved in adherence to host cells. May also protect bacteria against host defense mechanism by cleaving the immunoglobulin classes IgG, IgA and IgM. May be involved in the stability of secreted lipases. This is Glutamyl endopeptidase (sspA) from Staphylococcus aureus (strain COL).